The primary structure comprises 316 residues: 4-diphosphocytidyl-2-C-methyl-D-erythritol kinase (316 aa).

The active site involves Lys-23. 108–118 (PVAGGMAGGSA) contacts ATP. Asp-150 is a catalytic residue.

Belongs to the GHMP kinase family. IspE subfamily.

It catalyses the reaction 4-CDP-2-C-methyl-D-erythritol + ATP = 4-CDP-2-C-methyl-D-erythritol 2-phosphate + ADP + H(+). It functions in the pathway isoprenoid biosynthesis; isopentenyl diphosphate biosynthesis via DXP pathway; isopentenyl diphosphate from 1-deoxy-D-xylulose 5-phosphate: step 3/6. Functionally, catalyzes the phosphorylation of the position 2 hydroxy group of 4-diphosphocytidyl-2C-methyl-D-erythritol. This Mycobacterium avium (strain 104) protein is 4-diphosphocytidyl-2-C-methyl-D-erythritol kinase.